The chain runs to 292 residues: Fat storage-inducing transmembrane protein 1 (292 aa).

Residues 1-18 (MERGPTVGAGLGAGTRVR) lie on the Lumenal side of the membrane. A helical membrane pass occupies residues 19–39 (ALLGCLVKVLLWVASALLYFG). Over 40–54 (SEQAARLLGSPCLRR) the chain is Cytoplasmic. Residues 55–75 (LYHAWLAAVVIFGPLLQFHVN) traverse the membrane as a helical segment. Over 76–94 (SRTIFASHGNFFNIKFVNS) the chain is Lumenal. The helical transmembrane segment at 95-115 (AWGWTCTFLGGFVLLVVFLAT) threads the bilayer. Topologically, residues 116 to 141 (RRVAVTARHLSRLVVGAAVWRGAGRA) are cytoplasmic. A helical transmembrane segment spans residues 142 to 162 (FLLIEDLTGSCFEPLPQGLLL). Residues 163–187 (HELPDRKSCLAAGHQWRGYTVSSHT) are Lumenal-facing. His-186 is an active-site residue. The helical transmembrane segment at 188-208 (FLLTFCCLLMAEEAAVFAKYL) threads the bilayer. The Cytoplasmic segment spans residues 209–220 (AHGLPAGAPLRL). Residues 221-241 (VFLLNVLLLGLWNFLLLCTVI) traverse the membrane as a helical segment. Residues 242–249 (YFHQYTHK) are Lumenal-facing. Residue His-244 is part of the active site. A helical membrane pass occupies residues 250–270 (VVGAAVGTFAWYLTYGSWYHQ). The Cytoplasmic segment spans residues 271 to 292 (PWSPGIPGHGLFPRSRSMRKHN).

It belongs to the FIT family. FIT1 subfamily. As to expression, predominantly expressed in skeletal muscle and at lower levels in the heart (at protein level). In the heart, mRNA expression levels do not correlate well with protein levels, suggesting post-transcriptional regulation in this organ.

The protein resides in the endoplasmic reticulum membrane. Plays an important role in the formation of lipid droplets (LDs) which are storage organelles at the center of lipid and energy homeostasis. Directly binds to diacylglycerol (DAGs) and triacylglycerol. The protein is Fat storage-inducing transmembrane protein 1 of Mus musculus (Mouse).